The following is a 79-amino-acid chain: DNA gyrase inhibitor YacG (79 aa).

The Zn(2+) site is built by Cys7, Cys10, Cys26, and Cys30.

The protein belongs to the DNA gyrase inhibitor YacG family. As to quaternary structure, interacts with GyrB. Requires Zn(2+) as cofactor.

Inhibits all the catalytic activities of DNA gyrase by preventing its interaction with DNA. Acts by binding directly to the C-terminal domain of GyrB, which probably disrupts DNA binding by the gyrase. The sequence is that of DNA gyrase inhibitor YacG from Shewanella pealeana (strain ATCC 700345 / ANG-SQ1).